The sequence spans 517 residues: Acetylcholine receptor subunit gamma (517 aa).

Positions 1–22 (MHGGQGPLLLLLLLAVCLGAQG) are cleaved as a signal peptide. The Extracellular portion of the chain corresponds to 23–240 (RNQEERLLAD…VVFYLLIQRK (218 aa)). N-linked (GlcNAc...) asparagine glycosylation is found at Asn-52 and Asn-163. A disulfide bond links Cys-150 and Cys-164. Transmembrane regions (helical) follow at residues 241-265 (PLFY…IHFL), 275-293 (TVAI…LVAK), and 309-330 (LTFL…LNVS). The Cytoplasmic portion of the chain corresponds to 331–474 (LRSPHTHSMA…WFLVGRVLDR (144 aa)). The chain crosses the membrane as a helical span at residues 475 to 495 (VCFLAMLSLFICGTAGIFLMA).

It belongs to the ligand-gated ion channel (TC 1.A.9) family. Acetylcholine receptor (TC 1.A.9.1) subfamily. Gamma/CHRNG sub-subfamily. Pentamer of two alpha chains, and one each of the beta, delta, and gamma (in immature muscle) or epsilon (in mature muscle) chains.

Its subcellular location is the postsynaptic cell membrane. The protein localises to the cell membrane. The enzyme catalyses K(+)(in) = K(+)(out). The catalysed reaction is Na(+)(in) = Na(+)(out). After binding acetylcholine, the AChR responds by an extensive change in conformation that affects all subunits and leads to opening of an ion-conducting channel across the plasma membrane. This chain is Acetylcholine receptor subunit gamma, found in Homo sapiens (Human).